We begin with the raw amino-acid sequence, 337 residues long: Putative carboxypeptidase TP_0688 (337 aa).

Serine 118 acts as the Nucleophile in catalysis. Active-site charge relay system residues include glutamate 234 and histidine 302.

This sequence belongs to the peptidase S66 family.

In Treponema pallidum (strain Nichols), this protein is Putative carboxypeptidase TP_0688.